Consider the following 101-residue polypeptide: Large ribosomal subunit protein bL21 (101 aa).

It belongs to the bacterial ribosomal protein bL21 family. As to quaternary structure, part of the 50S ribosomal subunit. Contacts protein L20.

Functionally, this protein binds to 23S rRNA in the presence of protein L20. The chain is Large ribosomal subunit protein bL21 from Corynebacterium efficiens (strain DSM 44549 / YS-314 / AJ 12310 / JCM 11189 / NBRC 100395).